Reading from the N-terminus, the 250-residue chain is NAD(P)H-hydrate epimerase (250 aa).

Residues 14 to 238 (AAALDVELMS…SIAEKYGIQK (225 aa)) form the YjeF N-terminal domain. 74 to 78 (NNGGD) contributes to the (6S)-NADPHX binding site. K(+) is bound by residues N75 and D143. Residues 147–154 (GFSFHGTA), Y159, and D180 contribute to the (6S)-NADPHX site. K(+) is bound at residue S183.

The protein belongs to the NnrE/AIBP family. It depends on K(+) as a cofactor.

The catalysed reaction is (6R)-NADHX = (6S)-NADHX. It carries out the reaction (6R)-NADPHX = (6S)-NADPHX. Its function is as follows. Catalyzes the epimerization of the S- and R-forms of NAD(P)HX, a damaged form of NAD(P)H that is a result of enzymatic or heat-dependent hydration. This is a prerequisite for the S-specific NAD(P)H-hydrate dehydratase to allow the repair of both epimers of NAD(P)HX. The sequence is that of NAD(P)H-hydrate epimerase from Thalassiosira pseudonana (Marine diatom).